We begin with the raw amino-acid sequence, 480 residues long: 2-phosphoxylose phosphatase 1 (480 aa).

The Cytoplasmic segment spans residues methionine 1–arginine 6. The helical; Signal-anchor for type II membrane protein transmembrane segment at phenylalanine 7 to phenylalanine 27 threads the bilayer. At histidine 28 to alanine 480 the chain is on the lumenal side. The active-site Nucleophile is histidine 97. Residues asparagine 194, asparagine 305, and asparagine 354 are each glycosylated (N-linked (GlcNAc...) asparagine). Aspartate 379 (proton donor) is an active-site residue.

It belongs to the histidine acid phosphatase family. Interacts with B3GAT3; the interaction increases the 2-phosphoxylose phosphatase activity of PXYLP1 during completion of linkage region formation in a B3GAT3-mediated manner.

Its subcellular location is the golgi apparatus membrane. The catalysed reaction is 3-O-[beta-D-GlcA-(1-&gt;3)-beta-D-Gal-(1-&gt;3)-beta-D-Gal-(1-&gt;4)-beta-D-2-O-P-Xyl]-L-seryl-[protein] + H2O = 3-O-(beta-D-GlcA-(1-&gt;3)-beta-D-Gal-(1-&gt;3)-beta-D-Gal-(1-&gt;4)-beta-D-Xyl)-L-seryl-[protein] + phosphate. Its function is as follows. Responsible for the 2-O-dephosphorylation of xylose in the glycosaminoglycan-protein linkage region of proteoglycans thereby regulating the amount of mature glycosaminoglycan (GAG) chains. Sulfated glycosaminoglycans (GAGs), including heparan sulfate and chondroitin sulfate, are synthesized on the so-called common GAG-protein linkage region (GlcUAbeta1-3Galbeta1-3Galbeta1-4Xylbeta1-O-Ser) of core proteins, which is formed by the stepwise addition of monosaccharide residues by the respective specific glycosyltransferases. Xylose 2-O-dephosphorylation during completion of linkage region formation is a prerequisite for the initiation and efficient elongation of the repeating disaccharide region of GAG chains. The sequence is that of 2-phosphoxylose phosphatase 1 from Mus musculus (Mouse).